An 872-amino-acid chain; its full sequence is Alanine--tRNA ligase (872 aa).

Zn(2+) contacts are provided by H567, H571, C669, and H673.

Belongs to the class-II aminoacyl-tRNA synthetase family. Zn(2+) serves as cofactor.

Its subcellular location is the cytoplasm. The enzyme catalyses tRNA(Ala) + L-alanine + ATP = L-alanyl-tRNA(Ala) + AMP + diphosphate. Catalyzes the attachment of alanine to tRNA(Ala) in a two-step reaction: alanine is first activated by ATP to form Ala-AMP and then transferred to the acceptor end of tRNA(Ala). Also edits incorrectly charged Ser-tRNA(Ala) and Gly-tRNA(Ala) via its editing domain. This Streptococcus agalactiae serotype Ia (strain ATCC 27591 / A909 / CDC SS700) protein is Alanine--tRNA ligase.